A 401-amino-acid polypeptide reads, in one-letter code: MYVVESKAGAIGCMILSLCCLGSWPAILTLLERRGRLPQHTFLDFATANLLAAIVIAFSLGEIGKSTFLKPDFTTQLPQDNWPSVLLAVAGGVLLSIGNLATQYAFAFVGLSVTEVITASITVVIGTTLNYFLDNKINKAEILFPGVGCFLIAVFLGAAVHASNAADVKEKLKSLPSEDLYSSIENGEDKPEIEKTDVESQEKLAEKAKAGTAGFYVELENKRAIKVFGKSIMIGLFITLFAGISLSLFSPAFNLATNDQWSTLPKGVPKLVVYTAFFYFSIAGFLISLILNLIFLYRPMVGLARSSLKKYIYDSKGRGWAVFAGFLCGFGNGLQFMGGQAAGYAAADSVQALPLVSTFWGIVLFGEYRKSSKRTYALLVSMLAMFVAAVAILMASSGHRK.

Topologically, residues 1–10 (MYVVESKAGA) are extracellular. Residues 11–31 (IGCMILSLCCLGSWPAILTLL) traverse the membrane as a helical segment. Over 32–40 (ERRGRLPQH) the chain is Cytoplasmic. Residues 41–61 (TFLDFATANLLAAIVIAFSLG) traverse the membrane as a helical segment. The Extracellular portion of the chain corresponds to 62 to 81 (EIGKSTFLKPDFTTQLPQDN). A helical membrane pass occupies residues 82–102 (WPSVLLAVAGGVLLSIGNLAT). Residues 103–104 (QY) are Cytoplasmic-facing. A helical transmembrane segment spans residues 105–125 (AFAFVGLSVTEVITASITVVI). Topologically, residues 126–141 (GTTLNYFLDNKINKAE) are extracellular. The chain crosses the membrane as a helical span at residues 142-162 (ILFPGVGCFLIAVFLGAAVHA). The Cytoplasmic segment spans residues 163–231 (SNAADVKEKL…KRAIKVFGKS (69 aa)). Residue 224-231 (AIKVFGKS) coordinates ATP. Residues 232-252 (IMIGLFITLFAGISLSLFSPA) traverse the membrane as a helical segment. The Extracellular segment spans residues 253-275 (FNLATNDQWSTLPKGVPKLVVYT). A helical membrane pass occupies residues 276-296 (AFFYFSIAGFLISLILNLIFL). Residues 297 to 318 (YRPMVGLARSSLKKYIYDSKGR) lie on the Cytoplasmic side of the membrane. The helical transmembrane segment at 319–339 (GWAVFAGFLCGFGNGLQFMGG) threads the bilayer. Topologically, residues 340-344 (QAAGY) are extracellular. The chain crosses the membrane as a helical span at residues 345–365 (AAADSVQALPLVSTFWGIVLF). Residues 366–374 (GEYRKSSKR) lie on the Cytoplasmic side of the membrane. Residues 375–395 (TYALLVSMLAMFVAAVAILMA) traverse the membrane as a helical segment. Residues 396-401 (SSGHRK) are Extracellular-facing.

It belongs to the plant ureide permease (TC 2.A.7.19) family. As to expression, expressed in developing seedlings, flower filaments and stigma, and the top and bottom parts of carpels in siliques.

It localises to the membrane. Proton-coupled transporter that transports a wide spectrum of oxo derivatives of heterocyclic nitrogen compounds. This Arabidopsis thaliana (Mouse-ear cress) protein is Ureide permease 4.